We begin with the raw amino-acid sequence, 967 residues long: Muscular LMNA-interacting protein (967 aa).

Phosphoserine is present on S129. Disordered stretches follow at residues E132–R154, G302–T336, Q432–S462, G506–H628, Q644–L685, S786–T838, and F929–E967. The interval P144–T811 is required for interaction with ISL1. Positions T437–T455 are enriched in low complexity. Residues T508–F523 are compositionally biased toward polar residues. A compositionally biased stretch (low complexity) spans V528–S541. Residues G543 to R556 show a composition bias toward basic and acidic residues. Composition is skewed to polar residues over residues I558–S567 and G658–L685. S792 carries the phosphoserine modification. Residues M800–T811 show a composition bias toward polar residues. The segment covering S826 to S835 has biased composition (low complexity). Polar residues predominate over residues S938–Y947. Residues P958–E967 show a composition bias toward basic and acidic residues.

In terms of assembly, directly interacts with LMNA. Interacts with ISL1 (via N-terminal domain); the interaction represses ISL1 transactivator activity. Interactions of ISL1 with MLIP1 and GCN5/KAT2A may be mutually exclusive. Post-translationally, may be ubiquitinated by UBE3C ubiquitin ligase; ubiquitination is followed by protein degradation. As to expression, predominantly expressed in the heart and skeletal muscle, but detected at lower levels in the lung and brain (at protein level). Also detected in smooth muscle, thymus and kidney. In brain, expressed by a subpopulation of cells within the hippocampus and cortex. In heart, expressed by cardiomyocytes. Expression is reduced in hypertrophic hearts at the transcript level. However, expression in hypertrophic hearts induced by transverse aortic constriction do not differ from control at the protein level.

It localises to the nucleus. It is found in the nucleus envelope. The protein resides in the PML body. The protein localises to the cytoplasm. Its subcellular location is the cytosol. It localises to the cell membrane. It is found in the sarcolemma. Its function is as follows. Required for myoblast differentiation into myotubes, possibly acting as a transcriptional regulator of the myogenic program. Required for cardiac adaptation to stress through integrated regulation of the AKT/mTOR pathways and FOXO1. Regulates cardiac homeostasis and plays a role in the protection against cardiac hypertrophy. Binds chromatin. May act as a transcriptional cofactor for ISL1, repressing its transcriptional activity. May also repress MYOCD transcriptional activity. This is Muscular LMNA-interacting protein from Mus musculus (Mouse).